The chain runs to 138 residues: Large ribosomal subunit protein uL16 (138 aa).

Residues 1–17 (MLIPRKVKHRKQHHPKQ) are compositionally biased toward basic residues. The disordered stretch occupies residues 1–24 (MLIPRKVKHRKQHHPKQRGIASGG).

The protein belongs to the universal ribosomal protein uL16 family. Part of the 50S ribosomal subunit.

Functionally, binds 23S rRNA and is also seen to make contacts with the A and possibly P site tRNAs. This is Large ribosomal subunit protein uL16 from Mycolicibacterium vanbaalenii (strain DSM 7251 / JCM 13017 / BCRC 16820 / KCTC 9966 / NRRL B-24157 / PYR-1) (Mycobacterium vanbaalenii).